A 191-amino-acid polypeptide reads, in one-letter code: Inosine triphosphate pyrophosphatase (191 aa).

Residue 15 to 20 (TGNANK) participates in ITP binding. A Mg(2+)-binding site is contributed by Glu43. Residues Lys55, 71 to 72 (DT), Lys88, 147 to 150 (FGWD), Lys168, and 173 to 174 (HR) contribute to the ITP site.

The protein belongs to the HAM1 NTPase family. Homodimer. Mg(2+) is required as a cofactor. The cofactor is Mn(2+).

The protein localises to the cytoplasm. The protein resides in the nucleus. The catalysed reaction is ITP + H2O = IMP + diphosphate + H(+). It catalyses the reaction dITP + H2O = dIMP + diphosphate + H(+). It carries out the reaction XTP + H2O = XMP + diphosphate + H(+). Pyrophosphatase that hydrolyzes non-canonical purine nucleotides such as inosine triphosphate (ITP), deoxyinosine triphosphate (dITP) or xanthosine 5'-triphosphate (XTP) to their respective monophosphate derivatives. The enzyme does not distinguish between the deoxy- and ribose forms. Probably excludes non-canonical purines from RNA and DNA precursor pools, thus preventing their incorporation into RNA and DNA and avoiding chromosomal lesions. This is Inosine triphosphate pyrophosphatase from Neurospora crassa (strain ATCC 24698 / 74-OR23-1A / CBS 708.71 / DSM 1257 / FGSC 987).